The following is a 271-amino-acid chain: Phosphatidylinositol transfer protein alpha isoform (271 aa).

Residues Thr-59, Lys-61, Glu-86, Asn-90, Thr-97, and Lys-195 each coordinate a 1,2-diacyl-sn-glycero-3-phospho-(1D-myo-inositol). Lys-216 bears the N6-acetyllysine mark. The segment covering 251–264 has biased composition (basic and acidic residues); the sequence is TKRQLDEMRQKDPV. The tract at residues 251-271 is disordered; that stretch reads TKRQLDEMRQKDPVKGMTADD.

The protein belongs to the PtdIns transfer protein family. PI transfer class I subfamily. Phosphorylated by PKC in a calcium and phosphatidylserine-dependent manner. Expressed in a wide range of tissues.

The protein resides in the cytoplasm. It localises to the nucleus. The enzyme catalyses a 1,2-diacyl-sn-glycero-3-phosphocholine(in) = a 1,2-diacyl-sn-glycero-3-phosphocholine(out). It catalyses the reaction a 1,2-diacyl-sn-glycero-3-phospho-(1D-myo-inositol)(in) = a 1,2-diacyl-sn-glycero-3-phospho-(1D-myo-inositol)(out). With respect to regulation, phosphatidylinositol transfer activity is inhibited by N-ethylmaleimide. Its function is as follows. Catalyzes the transfer of phosphatidylinositol (PI) and phosphatidylcholine (PC) between membranes. Shows a preference for PI and PC containing shorter saturated or monosaturated acyl chains at the sn-1 and sn-2 positions. Preference order for PC is C16:1 &gt; C16:0 &gt; C18:1 &gt; C18:0 &gt; C20:4 and for PI is C16:1 &gt; C16:0 &gt; C18:1 &gt; C18:0 &gt; C20:4 &gt; C20:3. The chain is Phosphatidylinositol transfer protein alpha isoform (Pitpna) from Rattus norvegicus (Rat).